The primary structure comprises 108 residues: MVNLFPVFTLIVIITILITTRELSTTMLIVSLVTDYIIINTQYTEQQHENNTFSMPQKNSFNESYNKDKKSNTHIPYQWLAPELKEAESKYWWGNYDPHSEPVLAGAS.

Residues 10–32 form a helical membrane-spanning segment; the sequence is LIVIITILITTRELSTTMLIVSL. The segment covering 49 to 64 has biased composition (polar residues); the sequence is ENNTFSMPQKNSFNES. The tract at residues 49–69 is disordered; sequence ENNTFSMPQKNSFNESYNKDK. 2 N-linked (GlcNAc...) asparagine; by host glycosylation sites follow: Asn-50 and Asn-62.

It belongs to the asfivirus H108R family.

The protein resides in the virion membrane. This African swine fever virus (strain Badajoz 1971 Vero-adapted) (Ba71V) protein is Inner membrane protein H108R.